Consider the following 158-residue polypeptide: Crossover junction endodeoxyribonuclease RuvC (158 aa).

Residues Asp7, Glu67, and Asp140 contribute to the active site. The Mg(2+) site is built by Asp7, Glu67, and Asp140.

It belongs to the RuvC family. Homodimer which binds Holliday junction (HJ) DNA. The HJ becomes 2-fold symmetrical on binding to RuvC with unstacked arms; it has a different conformation from HJ DNA in complex with RuvA. In the full resolvosome a probable DNA-RuvA(4)-RuvB(12)-RuvC(2) complex forms which resolves the HJ. Mg(2+) is required as a cofactor.

It localises to the cytoplasm. It catalyses the reaction Endonucleolytic cleavage at a junction such as a reciprocal single-stranded crossover between two homologous DNA duplexes (Holliday junction).. Its function is as follows. The RuvA-RuvB-RuvC complex processes Holliday junction (HJ) DNA during genetic recombination and DNA repair. Endonuclease that resolves HJ intermediates. Cleaves cruciform DNA by making single-stranded nicks across the HJ at symmetrical positions within the homologous arms, yielding a 5'-phosphate and a 3'-hydroxyl group; requires a central core of homology in the junction. The consensus cleavage sequence is 5'-(A/T)TT(C/G)-3'. Cleavage occurs on the 3'-side of the TT dinucleotide at the point of strand exchange. HJ branch migration catalyzed by RuvA-RuvB allows RuvC to scan DNA until it finds its consensus sequence, where it cleaves and resolves the cruciform DNA. The sequence is that of Crossover junction endodeoxyribonuclease RuvC from Dictyoglomus turgidum (strain DSM 6724 / Z-1310).